We begin with the raw amino-acid sequence, 397 residues long: Tryptophan synthase beta chain (397 aa).

Lys90 bears the N6-(pyridoxal phosphate)lysine mark.

Belongs to the TrpB family. Tetramer of two alpha and two beta chains. Requires pyridoxal 5'-phosphate as cofactor.

It catalyses the reaction (1S,2R)-1-C-(indol-3-yl)glycerol 3-phosphate + L-serine = D-glyceraldehyde 3-phosphate + L-tryptophan + H2O. It functions in the pathway amino-acid biosynthesis; L-tryptophan biosynthesis; L-tryptophan from chorismate: step 5/5. Functionally, the beta subunit is responsible for the synthesis of L-tryptophan from indole and L-serine. This Nitrosomonas europaea (strain ATCC 19718 / CIP 103999 / KCTC 2705 / NBRC 14298) protein is Tryptophan synthase beta chain.